Consider the following 82-residue polypeptide: Small ribosomal subunit protein uS17 (82 aa).

Belongs to the universal ribosomal protein uS17 family. As to quaternary structure, part of the 30S ribosomal subunit.

Functionally, one of the primary rRNA binding proteins, it binds specifically to the 5'-end of 16S ribosomal RNA. The sequence is that of Small ribosomal subunit protein uS17 from Shewanella sediminis (strain HAW-EB3).